A 464-amino-acid chain; its full sequence is L-cystine uptake protein TcyP (464 aa).

10 consecutive transmembrane segments (helical) span residues 3-23 (TLLV…LYYM), 34-54 (VFTA…IYEP), 73-93 (YVKL…ISAF), 107-127 (GLII…GIAA), 184-204 (PTST…FIGV), 225-245 (IVMR…LALM), 263-283 (FVLA…LLIA), 347-367 (AGIY…IDPL), 371-391 (FILT…GVGG), and 395-415 (FAAL…ALVI).

This sequence belongs to the dicarboxylate/amino acid:cation symporter (DAACS) (TC 2.A.23) family.

The protein localises to the membrane. Mediates uptake of L-cystine, the oxidized form of L-cysteine. This is L-cystine uptake protein TcyP from Bacillus cereus (strain ATCC 10987 / NRS 248).